A 233-amino-acid chain; its full sequence is Small ribosomal subunit protein uS2c (233 aa).

Belongs to the universal ribosomal protein uS2 family.

Its subcellular location is the plastid. The protein localises to the chloroplast. The sequence is that of Small ribosomal subunit protein uS2c (rps2) from Staurastrum punctulatum (Green alga).